The sequence spans 1143 residues: uncharacterized protein (1143 aa).

Positions 1–20 (MKLLLLALILVLSNINLISG) are cleaved as a signal peptide. Residues 21–1121 (NGLVWPHPRL…PAAGGEDSSA (1101 aa)) lie on the Extracellular side of the membrane. A compositionally biased stretch (gly residues) spans 177–203 (NSGGSWSSGGSGNSGGGWSSGGSGNSG). A disordered region spans residues 177-1120 (NSGGSWSSGG…EPAAGGEDSS (944 aa)). The segment covering 222 to 236 (SSGGWTSGSHSSGSW) has biased composition (low complexity). Positions 237–283 (SSGGGSGSSSGGQSSGSWSSGGGSSSGGHSSGSWSSGGGSSAGGGSS) are enriched in gly residues. Positions 284–296 (SGSHSSGSWSSGG) are enriched in low complexity. Over residues 297 to 330 (SSSGGQSSGSWSSGGGSSSGGQSSGSWSSGGGSS) the composition is skewed to gly residues. The segment covering 331–368 (SGSHSSGSWSSGGSSSGSHSSGSWSSGGSSSSSGNSGW) has biased composition (low complexity). The span at 374–392 (GNTGGNTGGNTGGNTGGQS) shows a compositional bias: gly residues. The segment covering 393-403 (SGNSGWMTASG) has biased composition (low complexity). Composition is skewed to gly residues over residues 404–418 (GNTG…GGQS) and 430–444 (GNTG…GGQS). Composition is skewed to low complexity over residues 445 to 498 (SGSS…TSSG) and 506 to 541 (GSSS…SSGD). 6 stretches are compositionally biased toward gly residues: residues 555–573 (GNTG…GGNS), 580–596 (GNSG…GGNS), 604–622 (GNTG…GGNS), 629–783 (GNSG…GGNS), 790–843 (GNSG…GGAS), and 851–905 (GNSG…GGNS). Residues 906–1059 (GAATGANSGA…GGNGASGAAN (154 aa)) show a composition bias toward low complexity. The segment covering 1062-1078 (SIVTPNDQNVSPLSNSD) has biased composition (polar residues). Positions 1094–1114 (PTSRAPTVTPTPTSSAEEPAA) are enriched in low complexity. The chain crosses the membrane as a helical span at residues 1122–1142 (ISKYSIQSFGIFVLSMIIYLV). Residue Ile1143 is a topological domain, cytoplasmic.

It is found in the membrane. This is an uncharacterized protein from Dictyostelium discoideum (Social amoeba).